A 376-amino-acid polypeptide reads, in one-letter code: tRNA-specific 2-thiouridylase MnmA (376 aa).

Residues 17 to 24 (GMSGGVDS) and Met-43 contribute to the ATP site. An interaction with target base in tRNA region spans residues 103–105 (NPD). The active-site Nucleophile is Cys-108. Residues Cys-108 and Cys-204 are joined by a disulfide bond. Gly-132 contacts ATP. An interaction with tRNA region spans residues 154 to 156 (KDQ). Cys-204 (cysteine persulfide intermediate) is an active-site residue. Residues 316 to 317 (RY) form an interaction with tRNA region.

It belongs to the MnmA/TRMU family.

The protein resides in the cytoplasm. The catalysed reaction is S-sulfanyl-L-cysteinyl-[protein] + uridine(34) in tRNA + AH2 + ATP = 2-thiouridine(34) in tRNA + L-cysteinyl-[protein] + A + AMP + diphosphate + H(+). In terms of biological role, catalyzes the 2-thiolation of uridine at the wobble position (U34) of tRNA, leading to the formation of s(2)U34. This is tRNA-specific 2-thiouridylase MnmA from Pseudomonas syringae pv. syringae (strain B728a).